We begin with the raw amino-acid sequence, 339 residues long: Uroporphyrinogen decarboxylase (339 aa).

Residues 23 to 27 (RQAGR), aspartate 72, tyrosine 147, serine 202, and histidine 315 contribute to the substrate site.

Belongs to the uroporphyrinogen decarboxylase family. In terms of assembly, homodimer.

The protein localises to the cytoplasm. It catalyses the reaction uroporphyrinogen III + 4 H(+) = coproporphyrinogen III + 4 CO2. Its pathway is porphyrin-containing compound metabolism; protoporphyrin-IX biosynthesis; coproporphyrinogen-III from 5-aminolevulinate: step 4/4. In terms of biological role, catalyzes the decarboxylation of four acetate groups of uroporphyrinogen-III to yield coproporphyrinogen-III. The sequence is that of Uroporphyrinogen decarboxylase from Desulfotalea psychrophila (strain LSv54 / DSM 12343).